The chain runs to 488 residues: Probable glycine dehydrogenase (decarboxylating) subunit 2 (488 aa).

Lys-274 is modified (N6-(pyridoxal phosphate)lysine).

Belongs to the GcvP family. C-terminal subunit subfamily. The glycine cleavage system is composed of four proteins: P, T, L and H. In this organism, the P 'protein' is a heterodimer of two subunits. Requires pyridoxal 5'-phosphate as cofactor.

It catalyses the reaction N(6)-[(R)-lipoyl]-L-lysyl-[glycine-cleavage complex H protein] + glycine + H(+) = N(6)-[(R)-S(8)-aminomethyldihydrolipoyl]-L-lysyl-[glycine-cleavage complex H protein] + CO2. In terms of biological role, the glycine cleavage system catalyzes the degradation of glycine. The P protein binds the alpha-amino group of glycine through its pyridoxal phosphate cofactor; CO(2) is released and the remaining methylamine moiety is then transferred to the lipoamide cofactor of the H protein. The chain is Probable glycine dehydrogenase (decarboxylating) subunit 2 from Listeria monocytogenes serotype 4b (strain F2365).